The following is a 110-amino-acid chain: Cytochrome bo(3) ubiquinol oxidase subunit 4 (110 aa).

Residues 1 to 18 (MANAHDTHHEGNHGSVKS) lie on the Cytoplasmic side of the membrane. The chain crosses the membrane as a helical span at residues 19–39 (YMIGFILSIILTAIPFGLAMS). Topologically, residues 40 to 46 (PSLPKNL) are periplasmic. A helical transmembrane segment spans residues 47–67 (TVLIIVAMAVIQVVVHLVYFL). The Cytoplasmic portion of the chain corresponds to 68–78 (HMDRSKEQRNN). The helical transmembrane segment at 79 to 99 (VWTFLFTTLVIALLVGLSLWI) threads the bilayer. The Periplasmic portion of the chain corresponds to 100 to 110 (MFSIHFEMLAK).

This sequence belongs to the cytochrome c oxidase bacterial subunit 4 family. Heterooctamer of two A chains, two B chains, two C chains and two D chains.

It is found in the cell inner membrane. Cytochrome bo(3) ubiquinol terminal oxidase is the component of the aerobic respiratory chain of E.coli that predominates when cells are grown at high aeration. Has proton pump activity across the membrane in addition to electron transfer, pumping 2 protons/electron. This chain is Cytochrome bo(3) ubiquinol oxidase subunit 4 (cyoD), found in Pseudomonas putida (Arthrobacter siderocapsulatus).